The sequence spans 802 residues: Pyrophosphate-energized membrane proton pump 2 (802 aa).

6 consecutive transmembrane segments (helical) span residues 45–65 (VLSI…ASTS), 66–86 (PIIV…IYLT), 118–138 (YSTI…IYLF), 160–180 (VAAF…GMWV), 206–226 (AGGF…AILY), and 246–266 (LPLL…FAQL). Lysine 273 provides a ligand contact to substrate. Mg(2+) contacts are provided by aspartate 276, aspartate 280, and aspartate 306. Transmembrane regions (helical) follow at residues 348–368 (FILF…IGIL), 386–406 (MAVL…TFGA), 421–441 (WFNF…FVWI), 468–488 (IIAG…TISV), and 511–531 (GGLF…AYVL). Aspartate 541 and asparagine 568 together coordinate Mg(2+). 4 consecutive transmembrane segments (helical) span residues 577–597 (FAIG…MDEV), 615–635 (VFVG…WACA), 686–706 (GALA…LGYY), and 716–736 (VVAS…LFLN). Positions 743 and 773 each coordinate Mg(2+). Residue lysine 776 participates in substrate binding. The chain crosses the membrane as a helical span at residues 782–802 (SIHVLIKMLATITLVMAPVFL).

This sequence belongs to the H(+)-translocating pyrophosphatase (TC 3.A.10) family. K(+)-insensitive subfamily. In terms of assembly, monomer. In terms of tissue distribution, ubiquitous. Mostly expressed in cotyledons, roots and flowers. Especially high levels in trichomes, sepals and stamen filaments.

The protein resides in the golgi apparatus membrane. The catalysed reaction is diphosphate + H2O + H(+)(in) = 2 phosphate + 2 H(+)(out). With respect to regulation, activated by Mg(+) but not by K(+). Inhibited by Ca(2+). Functionally, pyrophosphatase active in both inorganic pyrophosphate hydrolysis and H(+) translocation. The polypeptide is Pyrophosphate-energized membrane proton pump 2 (AVPL1) (Arabidopsis thaliana (Mouse-ear cress)).